The following is a 433-amino-acid chain: 23S rRNA (uracil(1939)-C(5))-methyltransferase RlmD (433 aa).

Residues 10–68 enclose the TRAM domain; it reads RTTTRQIITVSVNDLDSFGQGVARHNGKTLFIPGLLPQENAEVAVTEDKKQYARAKVVR. Residues Cys-81, Cys-87, Cys-90, and Cys-162 each coordinate [4Fe-4S] cluster. S-adenosyl-L-methionine contacts are provided by Gln-265, Phe-294, Asn-299, Glu-315, Asn-342, and Asp-363. Cys-389 functions as the Nucleophile in the catalytic mechanism.

This sequence belongs to the class I-like SAM-binding methyltransferase superfamily. RNA M5U methyltransferase family. RlmD subfamily.

The catalysed reaction is uridine(1939) in 23S rRNA + S-adenosyl-L-methionine = 5-methyluridine(1939) in 23S rRNA + S-adenosyl-L-homocysteine + H(+). Its function is as follows. Catalyzes the formation of 5-methyl-uridine at position 1939 (m5U1939) in 23S rRNA. This chain is 23S rRNA (uracil(1939)-C(5))-methyltransferase RlmD, found in Shigella flexneri.